The sequence spans 357 residues: 5-hydroxytryptamine receptor 5A (357 aa).

The Extracellular segment spans residues 1-36; the sequence is MDLPINLTSFSLSTPSTLEPNRSLDTEALRTSQSFL. N6 and N21 each carry an N-linked (GlcNAc...) asparagine glycan. Residues 37–63 form a helical membrane-spanning segment; it reads SAFRVLVLTLLGFLAAATFTWNLLVLA. Residues 64–76 lie on the Cytoplasmic side of the membrane; it reads TILRVRTFHRVPH. Residues 77–103 traverse the membrane as a helical segment; sequence NLVASMAISDVLVAVLVMPLSLVHELS. Residues 104-114 lie on the Extracellular side of the membrane; the sequence is GRRWQLGRRLC. C114 and C192 form a disulfide bridge. A helical membrane pass occupies residues 115–137; sequence QLWIACDVLCCTASIWNVTAIAL. Serotonin is bound at residue D121. Residues 138–155 are Cytoplasmic-facing; that stretch reads DRYWSITRHLEYTLRARK. A helical membrane pass occupies residues 156–176; sequence RVSNVMILLTWALSAVISLAP. Over 177 to 198 the chain is Extracellular; the sequence is LLFGWGETYSELSEECQVSREP. Residues 199–220 form a helical membrane-spanning segment; it reads SYTVFSTVGAFYLPLCVVLFVY. Topologically, residues 221 to 287 are cytoplasmic; the sequence is WKIYKAAKFR…QKEQRAALMV (67 aa). A helical membrane pass occupies residues 288–312; it reads GILIGVFVLCWFPFFVTELISPLCS. Over 313–314 the chain is Extracellular; sequence WD. A helical membrane pass occupies residues 315 to 339; it reads IPALWKSIFLWLGYSNSFFNPLIYT. The Cytoplasmic segment spans residues 340 to 357; that stretch reads AFNRSYSSAFKVFFSKQQ.

This sequence belongs to the G-protein coupled receptor 1 family. As to expression, central nervous system.

It is found in the cell membrane. In terms of biological role, G-protein coupled receptor for 5-hydroxytryptamine (serotonin), a biogenic hormone that functions as a neurotransmitter, a hormone and a mitogen. Also functions as a receptor for ergot alkaloid derivatives and other psychoactive substances. Ligand binding causes a conformation change that triggers signaling via guanine nucleotide-binding proteins (G proteins) and modulates the activity of downstream effectors. Htr5a is coupled to G(i)/G(o) G alpha proteins and mediates inhibitory neurotransmission: signaling inhibits adenylate cyclase activity and activates a phosphatidylinositol-calcium second messenger system that regulates the release of Ca(2+) ions from intracellular stores. This Rattus norvegicus (Rat) protein is 5-hydroxytryptamine receptor 5A.